The following is a 501-amino-acid chain: MAINAQEISALIKKQIENFQPNFDVTETGVVTYIGDGIARARGLDNAMSGELLEFSNGTFGMAQNLESNDVGIIILGDFSTIREGDEVKRTGKIMEVPVGEALIGRVVNPLGQPVDGLGDIETTGFRPVETPAPGVMQRKSVFEPLQTGLKAIDALVPIGRGQRELIIGDRQTGKTSVAIDAILNQKGQDMICIYVAIGQKESTVRTQVETLRRYGALDYTIVVTASASQPSPLLFIAPYAGVAMAEEFMYNGKHVLIVYDDLSKQAVAYRELSLLLRRPPGREAYPGDVFYLHSRLLERSAKVSDDLGGGSITALPFIETQAGDISAYIATNVISITDGQIFLQEDLFNSGIRPAIDAGSSVSRVGGSAQIKAMKRVAGTLRLDLASYRELEAFTQFGSDLDAATQAKLNRGRRTVEILKQPLHKPLPVEKQVVILYALTHGFLDDVPVDDILAFEEALYDYFDAHYDHLFETIRTTKDLPQEAELDAAIQAFKAQSNFK.

169 to 176 contacts ATP; it reads GDRQTGKT.

The protein belongs to the ATPase alpha/beta chains family. In terms of assembly, F-type ATPases have 2 components, CF(1) - the catalytic core - and CF(0) - the membrane proton channel. CF(1) has five subunits: alpha(3), beta(3), gamma(1), delta(1), epsilon(1). CF(0) has three main subunits: a(1), b(2) and c(9-12). The alpha and beta chains form an alternating ring which encloses part of the gamma chain. CF(1) is attached to CF(0) by a central stalk formed by the gamma and epsilon chains, while a peripheral stalk is formed by the delta and b chains.

Its subcellular location is the cell membrane. The catalysed reaction is ATP + H2O + 4 H(+)(in) = ADP + phosphate + 5 H(+)(out). In terms of biological role, produces ATP from ADP in the presence of a proton gradient across the membrane. The alpha chain is a regulatory subunit. The protein is ATP synthase subunit alpha of Streptococcus equi subsp. zooepidemicus (strain H70).